We begin with the raw amino-acid sequence, 363 residues long: Protein U2 (363 aa).

An N-terminal signal peptide occupies residues 1 to 18; that stretch reads MFCRSPFLGISSWSLASA.

The polypeptide is Protein U2 (U2) (Homo sapiens (Human)).